Here is a 410-residue protein sequence, read N- to C-terminus: MKVQIIAVGTELLLGDTLDTNSNYLSIKMRELGFDVYKRVVVGDNYDRLYKEIEEGLQQNDLIITTGGLGPTEDDITKKCCCDCLGKKMVLNEKSYAKLRKYFNEDEKAIQGNIKQCMFPEDAIVFENFNGTADCALIENNGKRILFLPGPPAEMKPIYENQVQQVLEQFATDCIISETLNISILGEWDMNERVKDIIESSNNPTVAPYFKKDKRILRITAKASDRQTALDMIAKKKQELRDRLGMYVFGENDETIEESVYKVLKEHDLSIMTSESITGGMIASKLVNVSGVSDYLKRSLVVYSNEAKIELLGVKAETIDTYGVVSENVAFEMVERMFEKFNVDCSISTTGFASGENAGLVYVGLGYKNTIKTLKLQLHGERNKIRNRVSNRALAELRLMILENVSRETF.

This sequence belongs to the CinA family.

The sequence is that of Putative competence-damage inducible protein from Finegoldia magna (strain ATCC 29328 / DSM 20472 / WAL 2508) (Peptostreptococcus magnus).